The sequence spans 506 residues: Lysine--tRNA ligase (506 aa).

E416 and E423 together coordinate Mg(2+).

It belongs to the class-II aminoacyl-tRNA synthetase family. In terms of assembly, homodimer. Requires Mg(2+) as cofactor.

The protein resides in the cytoplasm. It catalyses the reaction tRNA(Lys) + L-lysine + ATP = L-lysyl-tRNA(Lys) + AMP + diphosphate. The chain is Lysine--tRNA ligase from Xylella fastidiosa (strain M12).